The sequence spans 238 residues: Sugar fermentation stimulation protein homolog (238 aa).

It belongs to the SfsA family.

The polypeptide is Sugar fermentation stimulation protein homolog (Haemophilus influenzae (strain ATCC 51907 / DSM 11121 / KW20 / Rd)).